Here is a 90-residue protein sequence, read N- to C-terminus: Probable dynein light chain 2, cytoplasmic (90 aa).

The protein belongs to the dynein light chain family.

It is found in the cytoplasm. The protein localises to the cytoskeleton. Functionally, acts as one of several non-catalytic accessory components of a dynein complex. In Caenorhabditis elegans, this protein is Probable dynein light chain 2, cytoplasmic (dlc-2).